The chain runs to 450 residues: 23S rRNA (uracil(1939)-C(5))-methyltransferase RlmD (450 aa).

The TRAM domain maps to 12–70 (SKQLSAKLSLSVNQLDHLGAGIAQHQGKVVFIPGALPDETVTVQLTEQKKNYARAKLIK). [4Fe-4S] cluster contacts are provided by Cys-83, Cys-89, Cys-92, and Cys-171. 6 residues coordinate S-adenosyl-L-methionine: Gln-283, Phe-312, Asn-317, Glu-333, Asp-360, and Asp-380. Cys-406 (nucleophile) is an active-site residue.

Belongs to the class I-like SAM-binding methyltransferase superfamily. RNA M5U methyltransferase family. RlmD subfamily.

It catalyses the reaction uridine(1939) in 23S rRNA + S-adenosyl-L-methionine = 5-methyluridine(1939) in 23S rRNA + S-adenosyl-L-homocysteine + H(+). Catalyzes the formation of 5-methyl-uridine at position 1939 (m5U1939) in 23S rRNA. In Shewanella baltica (strain OS195), this protein is 23S rRNA (uracil(1939)-C(5))-methyltransferase RlmD.